The following is a 96-amino-acid chain: uncharacterized protein (96 aa).

Positions 57–96 constitute a CBS domain; sequence MTKKVRTTKKDASISDAAALMDKHNVNRLPVVDENNKLVL.

This is an uncharacterized protein from Methanobacterium ivanovii.